The primary structure comprises 176 residues: Large ribosomal subunit protein uL10 (176 aa).

Belongs to the universal ribosomal protein uL10 family. In terms of assembly, part of the ribosomal stalk of the 50S ribosomal subunit. The N-terminus interacts with L11 and the large rRNA to form the base of the stalk. The C-terminus forms an elongated spine to which L12 dimers bind in a sequential fashion forming a multimeric L10(L12)X complex.

Its function is as follows. Forms part of the ribosomal stalk, playing a central role in the interaction of the ribosome with GTP-bound translation factors. The sequence is that of Large ribosomal subunit protein uL10 from Sorangium cellulosum (strain So ce56) (Polyangium cellulosum (strain So ce56)).